Consider the following 333-residue polypeptide: Adenosine deaminase (333 aa).

The Zn(2+) site is built by H12 and H14. The substrate site is built by H14, D16, and G170. H197 is a binding site for Zn(2+). The active-site Proton donor is E200. D278 contributes to the Zn(2+) binding site. D279 provides a ligand contact to substrate.

The protein belongs to the metallo-dependent hydrolases superfamily. Adenosine and AMP deaminases family. Adenosine deaminase subfamily. Zn(2+) serves as cofactor.

It catalyses the reaction adenosine + H2O + H(+) = inosine + NH4(+). It carries out the reaction 2'-deoxyadenosine + H2O + H(+) = 2'-deoxyinosine + NH4(+). Its function is as follows. Catalyzes the hydrolytic deamination of adenosine and 2-deoxyadenosine. The polypeptide is Adenosine deaminase (Edwardsiella ictaluri (strain 93-146)).